Here is a 265-residue protein sequence, read N- to C-terminus: 3-methyl-2-oxobutanoate hydroxymethyltransferase (265 aa).

2 residues coordinate Mg(2+): D45 and D84. 3-methyl-2-oxobutanoate contacts are provided by residues D45–S46, D84, and K112. A Mg(2+)-binding site is contributed by E114. The active-site Proton acceptor is the E181.

Belongs to the PanB family. In terms of assembly, homodecamer; pentamer of dimers. Requires Mg(2+) as cofactor.

Its subcellular location is the cytoplasm. The catalysed reaction is 3-methyl-2-oxobutanoate + (6R)-5,10-methylene-5,6,7,8-tetrahydrofolate + H2O = 2-dehydropantoate + (6S)-5,6,7,8-tetrahydrofolate. The protein operates within cofactor biosynthesis; (R)-pantothenate biosynthesis; (R)-pantoate from 3-methyl-2-oxobutanoate: step 1/2. In terms of biological role, catalyzes the reversible reaction in which hydroxymethyl group from 5,10-methylenetetrahydrofolate is transferred onto alpha-ketoisovalerate to form ketopantoate. This Wigglesworthia glossinidia brevipalpis protein is 3-methyl-2-oxobutanoate hydroxymethyltransferase.